Consider the following 229-residue polypeptide: NAD(P)H-hydrate epimerase (229 aa).

Residues 10–217 enclose the YjeF N-terminal domain; the sequence is AINVDLELFN…ALQRKYELNL (208 aa). 60 to 64 serves as a coordination point for (6S)-NADPHX; it reads NNGGD. K(+) is bound by residues Asn61 and Asp125. (6S)-NADPHX is bound by residues 129–135 and Asp158; that span reads GFSFKPP. Residue Ser161 coordinates K(+).

This sequence belongs to the NnrE/AIBP family. It depends on K(+) as a cofactor.

It carries out the reaction (6R)-NADHX = (6S)-NADHX. The enzyme catalyses (6R)-NADPHX = (6S)-NADPHX. Catalyzes the epimerization of the S- and R-forms of NAD(P)HX, a damaged form of NAD(P)H that is a result of enzymatic or heat-dependent hydration. This is a prerequisite for the S-specific NAD(P)H-hydrate dehydratase to allow the repair of both epimers of NAD(P)HX. This Drosophila mojavensis (Fruit fly) protein is NAD(P)H-hydrate epimerase.